The chain runs to 197 residues: Proteasome subunit beta 1 (197 aa).

Residues 1–6 constitute a propeptide, removed in mature form; by autocatalysis; the sequence is MNRKTG. Threonine 7 functions as the Nucleophile in the catalytic mechanism.

This sequence belongs to the peptidase T1B family. The 20S proteasome core is composed of 14 alpha and 14 beta subunits that assemble into four stacked heptameric rings, resulting in a barrel-shaped structure. The two inner rings, each composed of seven catalytic beta subunits, are sandwiched by two outer rings, each composed of seven alpha subunits. The catalytic chamber with the active sites is on the inside of the barrel. Has a gated structure, the ends of the cylinder being occluded by the N-termini of the alpha-subunits. Is capped at one or both ends by the proteasome regulatory ATPase, PAN.

It is found in the cytoplasm. It catalyses the reaction Cleavage of peptide bonds with very broad specificity.. With respect to regulation, the formation of the proteasomal ATPase PAN-20S proteasome complex, via the docking of the C-termini of PAN into the intersubunit pockets in the alpha-rings, triggers opening of the gate for substrate entry. Interconversion between the open-gate and close-gate conformations leads to a dynamic regulation of the 20S proteasome proteolysis activity. Functionally, component of the proteasome core, a large protease complex with broad specificity involved in protein degradation. The polypeptide is Proteasome subunit beta 1 (Pyrococcus horikoshii (strain ATCC 700860 / DSM 12428 / JCM 9974 / NBRC 100139 / OT-3)).